The sequence spans 977 residues: P3N-PIPO polyprotein (977 aa).

The region spanning T132 to F274 is the Peptidase S30 domain. Active-site for P1 proteinase activity residues include H183, D192, and S225. Residues K325 to C328 carry the Involved in interaction with stylet and aphid transmission motif. Residues P583–K585 carry the Involved in virions binding and aphid transmission motif. Positions M609–G731 constitute a Peptidase C6 domain. Residues C617 and H690 each act as for helper component proteinase activity in the active site.

This sequence belongs to the potyviridae P3N-PIPO polyprotein family. Interacts (via PIPO domain) with host PCaP1 protein; this interaction may help to anchor the movement complex to the plasma membrane from which the complex could move to the plasmodesmata. In terms of processing, potyviral RNA is expressed as two polyproteins which undergo post-translational proteolytic processing. Genome polyprotein is processed by NIa-pro, P1 and HC-pro proteinases resulting in the production of at least ten individual proteins. P3N-PIPO is cleaved by P1 and HC-pro proteinases resulting in the production of three individual proteins. The P1 proteinase and the HC-pro cleave only their respective C-termini autocatalytically.

It is found in the host cell junction. The protein resides in the host plasmodesma. The catalysed reaction is Hydrolyzes a Gly-|-Gly bond at its own C-terminus, commonly in the sequence -Tyr-Xaa-Val-Gly-|-Gly, in the processing of the potyviral polyprotein.. Required for aphid transmission and also has proteolytic activity. Only cleaves a Gly-Gly dipeptide at its own C-terminus. Interacts with virions and aphid stylets. Acts as a suppressor of RNA-mediated gene silencing, also known as post-transcriptional gene silencing (PTGS), a mechanism of plant viral defense that limits the accumulation of viral RNAs. May have RNA-binding activity. Functionally, allows efficient cell to cell propagation, by bypassing the host cell wall barrier. Transports viral genome to neighboring plant cells directly through plasmosdesmata, without any budding. This chain is P3N-PIPO polyprotein, found in Nicotiana tabacum (Common tobacco).